The following is a 296-amino-acid chain: Phosphatidylserine decarboxylase proenzyme (296 aa).

Active-site charge relay system; for autoendoproteolytic cleavage activity residues include Asp113, His169, and Ser256. The Schiff-base intermediate with substrate; via pyruvic acid; for decarboxylase activity role is filled by Ser256. At Ser256 the chain carries Pyruvic acid (Ser); by autocatalysis.

The protein belongs to the phosphatidylserine decarboxylase family. PSD-B subfamily. Prokaryotic type II sub-subfamily. As to quaternary structure, heterodimer of a large membrane-associated beta subunit and a small pyruvoyl-containing alpha subunit. It depends on pyruvate as a cofactor. In terms of processing, is synthesized initially as an inactive proenzyme. Formation of the active enzyme involves a self-maturation process in which the active site pyruvoyl group is generated from an internal serine residue via an autocatalytic post-translational modification. Two non-identical subunits are generated from the proenzyme in this reaction, and the pyruvate is formed at the N-terminus of the alpha chain, which is derived from the carboxyl end of the proenzyme. The autoendoproteolytic cleavage occurs by a canonical serine protease mechanism, in which the side chain hydroxyl group of the serine supplies its oxygen atom to form the C-terminus of the beta chain, while the remainder of the serine residue undergoes an oxidative deamination to produce ammonia and the pyruvoyl prosthetic group on the alpha chain. During this reaction, the Ser that is part of the protease active site of the proenzyme becomes the pyruvoyl prosthetic group, which constitutes an essential element of the active site of the mature decarboxylase.

It localises to the cell membrane. The catalysed reaction is a 1,2-diacyl-sn-glycero-3-phospho-L-serine + H(+) = a 1,2-diacyl-sn-glycero-3-phosphoethanolamine + CO2. It functions in the pathway phospholipid metabolism; phosphatidylethanolamine biosynthesis; phosphatidylethanolamine from CDP-diacylglycerol: step 2/2. Functionally, catalyzes the formation of phosphatidylethanolamine (PtdEtn) from phosphatidylserine (PtdSer). The protein is Phosphatidylserine decarboxylase proenzyme of Clostridium beijerinckii (strain ATCC 51743 / NCIMB 8052) (Clostridium acetobutylicum).